We begin with the raw amino-acid sequence, 331 residues long: Small ribosomal subunit protein uS2 (331 aa).

Belongs to the universal ribosomal protein uS2 family.

This is Small ribosomal subunit protein uS2 from Rhodopseudomonas palustris (strain BisB5).